Here is a 132-residue protein sequence, read N- to C-terminus: uncharacterized protein (132 aa).

This is an uncharacterized protein from Acanthamoeba polyphaga (Amoeba).